The primary structure comprises 1137 residues: MQWRGAGLWWPRRRQQQQQQQPPPPAFGPPAAAMVPPSRGVSPGLGGRPTSALLFLCYLNFVPSLGRQTSLTTSVLPRTEQSTTYADFIYFTAFEGSVRNVSEVSVEYLCSQPCVVHLEAVVSSEFRSSIPVYKKRWRNEKHLHTSRTQTVHVKFPSIMVYRDDYLIRHPISVSTVILRAWITHWHSGGGLNVRGEENLLHAVAKNYTLLQTVPPFERPFKDHQVCLEWNMDYLWSLWANRIPQCPLESDAVALLSFPYASSGENTGIVKKLQNFQNRELEATRSQRVDYPMVTISLWLYLLHYCEASLCGILYFVDSNEMYGTPSVFLTEDGSLHIQMHLVKGEDLAVKTKFTIPLKEWCRLDISFNGGQIVVTASIGWDLKSYHNQTISFHEDFYYNDTAGYFIIGGSRYVAGIEGFFGPVKYYRLRSLHPAQVLNPFLEKELAEQIKLYYERCTEVQDIISSYAATVQVGGERRETCDFHNSYLDLKRKYGRAEVCRGLPWEKELRDRHPSLFQSLLQMDLLTVPWNQNDSVLEIGARIFEKAVKRLSGVDGLHQISSAIPFLMDSSCCGYHKASYYLTVFYETGLNGPRDQLQGMLYSLVGGQGSERLSSMNLGYKHYQGVDSYPLDWELSYAYYSNIATKTPLDQHTLQGDQAYVETIRLKDDEILKVQTKEDGDVFMWLKHEATRGNAAAQQRLAQMLFWGQQGVAKNPEAAIEWYAKGALETEDPALIYDYAIVLFKGQGVKKNRRLALELMKKAASKGLHQAVNGLGWYYHKFRKNYAKAAKYWLKAEEMGNPDASYNLGVLYLDGIFPGVPGRNLTLAGEYFHKAAQGGHIEGTLWCSLYYITGNLETFPRDPEKAVVWAKHVAEKNGYLGHVIRKGLNAYLEGLWHEALLYYVLAAETGIEVSQTNLAHICEERPDLAGRYLGVNCVWRYYNFSVFQIDAPSFAYLKMGDLYYYGHQNQSQDLELSVQMYAQAALDGDSQGFFNLAALIEEGAVIPHHILEFLEIDPSLHSSNTSILQELYERCWSLSNEESLSPCSLAWLYLHLRLLWGAVLHSALIYFLGTFLLSVVIAWMVLYLQYISASGSSPAPAWVSADPTSSTPSPAVPPAADASDHDPPMMANGPEPRG.

The interval 1 to 42 is disordered; it reads MQWRGAGLWWPRRRQQQQQQQPPPPAFGPPAAAMVPPSRGVS. 2 N-linked (GlcNAc...) asparagine glycosylation sites follow: Asn206 and Asn387. 7 Sel1-like repeats span residues 575–609, 611–647, 694–730, 732–767, 768–800, 801–839, and 840–877; these read HKAS…GQGS, RLSS…TKTP, AAAQ…LETE, PALI…SKGL, HQAV…EMGN, PDAS…QGGH, and IEGT…EKNG. Phosphoserine is present on Ser613. An N-linked (GlcNAc...) asparagine glycan is attached at Asn942. One copy of the Sel1-like 8 repeat lies at 952–988; it reads SFAYLKMGDLYYYGHQNQSQDLELSVQMYAQAALDGD. A helical transmembrane segment spans residues 1067–1087; it reads LIYFLGTFLLSVVIAWMVLYL. Residues 1100 to 1137 are disordered; that stretch reads AWVSADPTSSTPSPAVPPAADASDHDPPMMANGPEPRG. The span at 1102–1120 shows a compositional bias: low complexity; sequence VSADPTSSTPSPAVPPAAD.

It is found in the membrane. The protein is Protein sel-1 homolog 3 (Sel1l3) of Mus musculus (Mouse).